The chain runs to 347 residues: S-adenosylmethionine:tRNA ribosyltransferase-isomerase (347 aa).

Belongs to the QueA family. As to quaternary structure, monomer.

It is found in the cytoplasm. It carries out the reaction 7-aminomethyl-7-carbaguanosine(34) in tRNA + S-adenosyl-L-methionine = epoxyqueuosine(34) in tRNA + adenine + L-methionine + 2 H(+). Its pathway is tRNA modification; tRNA-queuosine biosynthesis. In terms of biological role, transfers and isomerizes the ribose moiety from AdoMet to the 7-aminomethyl group of 7-deazaguanine (preQ1-tRNA) to give epoxyqueuosine (oQ-tRNA). The chain is S-adenosylmethionine:tRNA ribosyltransferase-isomerase from Streptococcus thermophilus (strain CNRZ 1066).